The primary structure comprises 431 residues: Adenylosuccinate synthetase (431 aa).

Residues 13–19 (GDEGKGK) and 41–43 (GHT) contribute to the GTP site. Catalysis depends on Asp14, which acts as the Proton acceptor. Mg(2+)-binding residues include Asp14 and Gly41. Residues 14-17 (DEGK), 39-42 (NAGH), Thr130, Arg144, Gln225, Thr240, and Arg304 contribute to the IMP site. His42 acts as the Proton donor in catalysis. 300–306 (ATTGRKR) lines the substrate pocket. Residues Arg306, 332–334 (KLD), and 415–417 (STG) each bind GTP.

This sequence belongs to the adenylosuccinate synthetase family. In terms of assembly, homodimer. It depends on Mg(2+) as a cofactor.

It is found in the cytoplasm. It catalyses the reaction IMP + L-aspartate + GTP = N(6)-(1,2-dicarboxyethyl)-AMP + GDP + phosphate + 2 H(+). The protein operates within purine metabolism; AMP biosynthesis via de novo pathway; AMP from IMP: step 1/2. Functionally, plays an important role in the de novo pathway of purine nucleotide biosynthesis. Catalyzes the first committed step in the biosynthesis of AMP from IMP. This is Adenylosuccinate synthetase from Shewanella loihica (strain ATCC BAA-1088 / PV-4).